Consider the following 137-residue polypeptide: Large ribosomal subunit protein uL16 (137 aa).

Residues 1–16 are compositionally biased toward basic residues; the sequence is MLQPKRTKFRKMQKGR. A disordered region spans residues 1–22; that stretch reads MLQPKRTKFRKMQKGRIRGEAK.

The protein belongs to the universal ribosomal protein uL16 family. As to quaternary structure, part of the 50S ribosomal subunit.

In terms of biological role, binds 23S rRNA and is also seen to make contacts with the A and possibly P site tRNAs. This Jannaschia sp. (strain CCS1) protein is Large ribosomal subunit protein uL16.